Reading from the N-terminus, the 81-residue chain is Photosystem I iron-sulfur center (81 aa).

2 4Fe-4S ferredoxin-type domains span residues 2–31 and 39–68; these read SHSV…MVPW and IASS…IRVY. The [4Fe-4S] cluster site is built by cysteine 11, cysteine 14, cysteine 17, cysteine 21, cysteine 48, cysteine 51, cysteine 54, and cysteine 58.

The G.violaceus PSI reaction center is composed of one copy each of PsaA,B,C,D,E,F,L,M and Z, and forms trimeric complexes. Requires [4Fe-4S] cluster as cofactor.

The protein localises to the cell inner membrane. The enzyme catalyses reduced [plastocyanin] + hnu + oxidized [2Fe-2S]-[ferredoxin] = oxidized [plastocyanin] + reduced [2Fe-2S]-[ferredoxin]. Apoprotein for the two 4Fe-4S centers FA and FB of photosystem I (PSI); essential for photochemical activity. FB is the terminal electron acceptor of PSI, donating electrons to ferredoxin. The C-terminus interacts with PsaA/B/D and helps assemble the protein into the PSI complex. Required for binding of PsaD and PsaE to PSI. PSI is a plastocyanin/cytochrome c6-ferredoxin oxidoreductase, converting photonic excitation into a charge separation, which transfers an electron from the donor P700 chlorophyll pair to the spectroscopically characterized acceptors A0, A1, FX, FA and FB in turn. This Gloeobacter violaceus (strain ATCC 29082 / PCC 7421) protein is Photosystem I iron-sulfur center.